Here is a 183-residue protein sequence, read N- to C-terminus: Capsid protein (183 aa).

Residues 143-183 (LPENAVVRRRGRSPRRRTPSPRRRRSQSPRRRRSQSRGSQC) form a disordered region. Over residues 149–177 (VRRRGRSPRRRTPSPRRRRSQSPRRRRSQ) the composition is skewed to basic residues. Ser155, Ser162, and Ser170 each carry phosphoserine; by host. A 1; half-length repeat occupies 155–161 (SPRRRTP). The interval 155–177 (SPRRRTPSPRRRRSQSPRRRRSQ) is 3 X 8 AA repeats of S-P-R-R-R-[PR]-S-Q. A Bipartite nuclear localization signal motif is present at residues 158–175 (RRTPSPRRRRSQSPRRRR). 2 repeat units span residues 162–169 (SPRRRRSQ) and 170–177 (SPRRRRSQ). Residues 177–183 (QSRGSQC) form an RNA binding region.

This sequence belongs to the orthohepadnavirus core antigen family. As to quaternary structure, homodimerizes, then multimerizes. Interacts with cytosol exposed regions of viral L glycoprotein present in the reticulum-to-Golgi compartment. Interacts with human FLNB. Phosphorylated form interacts with host importin alpha; this interaction depends on the exposure of the NLS, which itself depends upon genome maturation and/or phosphorylation of the capsid protein. Interacts with host NUP153. Phosphorylated by host SRPK1, SRPK2, and maybe protein kinase C or GAPDH. Phosphorylation is critical for pregenomic RNA packaging. Protein kinase C phosphorylation is stimulated by HBx protein and may play a role in transport of the viral genome to the nucleus at the late step during the viral replication cycle.

The protein localises to the virion. Its subcellular location is the host cytoplasm. Functionally, self assembles to form an icosahedral capsid. Most capsids appear to be large particles with an icosahedral symmetry of T=4 and consist of 240 copies of capsid protein, though a fraction forms smaller T=3 particles consisting of 180 capsid proteins. Entering capsids are transported along microtubules to the nucleus. Phosphorylation of the capsid is thought to induce exposure of nuclear localization signal in the C-terminal portion of the capsid protein that allows binding to the nuclear pore complex via the importin (karyopherin-) alpha and beta. Capsids are imported in intact form through the nuclear pore into the nuclear basket, where it probably binds NUP153. Only capsids that contain the mature viral genome can release the viral DNA and capsid protein into the nucleoplasm. Immature capsids get stuck in the basket. Capsids encapsulate the pre-genomic RNA and the P protein. Pre-genomic RNA is reverse-transcribed into DNA while the capsid is still in the cytoplasm. The capsid can then either be directed to the nucleus, providing more genomes for transcription, or bud through the endoplasmic reticulum to provide new virions. The chain is Capsid protein from Homo sapiens (Human).